The primary structure comprises 379 residues: UDP-4-amino-4-deoxy-L-arabinose--oxoglutarate aminotransferase (379 aa).

K182 carries the N6-(pyridoxal phosphate)lysine modification.

Belongs to the DegT/DnrJ/EryC1 family. ArnB subfamily. In terms of assembly, homodimer. It depends on pyridoxal 5'-phosphate as a cofactor.

It catalyses the reaction UDP-4-amino-4-deoxy-beta-L-arabinose + 2-oxoglutarate = UDP-beta-L-threo-pentopyranos-4-ulose + L-glutamate. It functions in the pathway nucleotide-sugar biosynthesis; UDP-4-deoxy-4-formamido-beta-L-arabinose biosynthesis; UDP-4-deoxy-4-formamido-beta-L-arabinose from UDP-alpha-D-glucuronate: step 2/3. It participates in bacterial outer membrane biogenesis; lipopolysaccharide biosynthesis. Its function is as follows. Catalyzes the conversion of UDP-4-keto-arabinose (UDP-Ara4O) to UDP-4-amino-4-deoxy-L-arabinose (UDP-L-Ara4N). The modified arabinose is attached to lipid A and is required for resistance to polymyxin and cationic antimicrobial peptides. In Salmonella heidelberg (strain SL476), this protein is UDP-4-amino-4-deoxy-L-arabinose--oxoglutarate aminotransferase.